We begin with the raw amino-acid sequence, 45 residues long: MELAMLLAKLPEAYSVFNPLVDVLPVIPVFFLLLAFVWQAAVGFR.

Positions 1-8 (MELAMLLA) are excised as a propeptide. The helical transmembrane segment at 24 to 44 (LPVIPVFFLLLAFVWQAAVGF) threads the bilayer.

Belongs to the PsbK family. PSII is composed of 1 copy each of membrane proteins PsbA, PsbB, PsbC, PsbD, PsbE, PsbF, PsbH, PsbI, PsbJ, PsbK, PsbL, PsbM, PsbT, PsbX, PsbY, PsbZ, Psb30/Ycf12, peripheral proteins PsbO, CyanoQ (PsbQ), PsbU, PsbV and a large number of cofactors. It forms dimeric complexes.

The protein resides in the cellular thylakoid membrane. One of the components of the core complex of photosystem II (PSII). PSII is a light-driven water:plastoquinone oxidoreductase that uses light energy to abstract electrons from H(2)O, generating O(2) and a proton gradient subsequently used for ATP formation. It consists of a core antenna complex that captures photons, and an electron transfer chain that converts photonic excitation into a charge separation. This is Photosystem II reaction center protein K from Trichodesmium erythraeum (strain IMS101).